A 240-amino-acid chain; its full sequence is 7-cyano-7-deazaguanine synthase (240 aa).

18 to 28 contacts ATP; it reads FSGGQDSTTCL. Zn(2+) is bound by residues Cys-197, Cys-206, Cys-209, and Cys-212.

This sequence belongs to the QueC family. Zn(2+) serves as cofactor.

The catalysed reaction is 7-carboxy-7-deazaguanine + NH4(+) + ATP = 7-cyano-7-deazaguanine + ADP + phosphate + H2O + H(+). Its pathway is purine metabolism; 7-cyano-7-deazaguanine biosynthesis. Its function is as follows. Catalyzes the ATP-dependent conversion of 7-carboxy-7-deazaguanine (CDG) to 7-cyano-7-deazaguanine (preQ(0)). The protein is 7-cyano-7-deazaguanine synthase of Shewanella baltica (strain OS223).